The sequence spans 297 residues: Ribonuclease HIII (297 aa).

One can recognise an RNase H type-2 domain in the interval Ile-81–Lys-297. 3 residues coordinate a divalent metal cation: Asp-87, Glu-88, and Asp-192.

Belongs to the RNase HII family. RnhC subfamily. Requires Mn(2+) as cofactor. It depends on Mg(2+) as a cofactor.

Its subcellular location is the cytoplasm. It catalyses the reaction Endonucleolytic cleavage to 5'-phosphomonoester.. Endonuclease that specifically degrades the RNA of RNA-DNA hybrids. The sequence is that of Ribonuclease HIII from Streptococcus agalactiae serotype Ia (strain ATCC 27591 / A909 / CDC SS700).